The primary structure comprises 790 residues: Nuclear cap-binding protein subunit 1 (790 aa).

Residues 1–26 (MSRRRHSDENDGGQPHKRRKTSDANE) form a disordered region. A Nuclear localization signal motif is present at residues 3–20 (RRRHSDENDGGQPHKRRK). At S7 the chain carries Phosphoserine; by RPS6KB1. T21 bears the Phosphothreonine; by RPS6KB1 mark. S22 is modified (phosphoserine; by RPS6KB1). Residues 28–240 (EDHLESLICK…CLWAQIQKLK (213 aa)) form the MIF4G domain. S201 carries the phosphoserine modification. K204 carries the N6-acetyllysine modification. The stretch at 643–713 (STIRKMNKHV…SEQKNLFLVI (71 aa)) forms a coiled coil. K684 participates in a covalent cross-link: Glycyl lysine isopeptide (Lys-Gly) (interchain with G-Cter in SUMO2). K698 bears the N6-acetyllysine mark.

It belongs to the NCBP1 family. As to quaternary structure, component of the nuclear cap-binding complex (CBC), a heterodimer composed of NCBP1/CBP80 and NCBP2/CBP20 that interacts with m7GpppG-capped RNA. Found in a U snRNA export complex containing PHAX/RNUXA, NCBP1/CBP80, NCBP2/CBP20, RAN, XPO1 and m7G-capped RNA. Identified in a IGF2BP1-dependent mRNP granule complex containing untranslated mRNAs. Interacts with PHAX/RNUXA, SRRT/ARS2, EIF4G2, IGF2BP1, HNRNPF, HNRNPH1, KIAA0427/CTIF, PARN, DROSHA, UPF1 and ALYREF/THOC4. May interact with EIF4G1; the interaction is however controversial since it is reported by PubMed:11340157, PubMed:15059963 and PubMed:15361857, but is not observed by PubMed:19648179. The large PER complex involved in the repression of transcriptional termination is composed of at least PER2, CDK9, DDX5, DHX9, NCBP1/CBP80 and POLR2A. Component of an alternative nuclear cap-binding complex (CBC) composed of NCBP1/CBP80 and NCBP3. Interacts with METTL3. Interacts with ZFC3H1 in a RNase-insensitive manner. Interacts with MTREX. Interacts with TASOR. Interacts with DHX34; the interaction is RNA-dependent. Interacts with KPNA3. Dephosphorylated at Thr-21 by the PNUTS-PP1 complex during RNA polymerase II transcription pause-release.

The protein localises to the nucleus. Its subcellular location is the cytoplasm. Component of the cap-binding complex (CBC), which binds cotranscriptionally to the 5'-cap of pre-mRNAs and is involved in various processes such as pre-mRNA splicing, translation regulation, nonsense-mediated mRNA decay, RNA-mediated gene silencing (RNAi) by microRNAs (miRNAs) and mRNA export. The CBC complex is involved in mRNA export from the nucleus via its interaction with ALYREF/THOC4/ALY, leading to the recruitment of the mRNA export machinery to the 5'-end of mRNA and to mRNA export in a 5' to 3' direction through the nuclear pore. The CBC complex is also involved in mediating U snRNA and intronless mRNAs export from the nucleus. The CBC complex is essential for a pioneer round of mRNA translation, before steady state translation when the CBC complex is replaced by cytoplasmic cap-binding protein eIF4E. The pioneer round of mRNA translation mediated by the CBC complex plays a central role in nonsense-mediated mRNA decay (NMD), NMD only taking place in mRNAs bound to the CBC complex, but not on eIF4E-bound mRNAs. The CBC complex enhances NMD in mRNAs containing at least one exon-junction complex (EJC) via its interaction with UPF1, promoting the interaction between UPF1 and UPF2. The CBC complex is also involved in 'failsafe' NMD, which is independent of the EJC complex, while it does not participate in Staufen-mediated mRNA decay (SMD). During cell proliferation, the CBC complex is also involved in microRNAs (miRNAs) biogenesis via its interaction with SRRT/ARS2 and is required for miRNA-mediated RNA interference. The CBC complex also acts as a negative regulator of PARN, thereby acting as an inhibitor of mRNA deadenylation. In the CBC complex, NCBP1/CBP80 does not bind directly capped RNAs (m7GpppG-capped RNA) but is required to stabilize the movement of the N-terminal loop of NCBP2/CBP20 and lock the CBC into a high affinity cap-binding state with the cap structure. Associates with NCBP3 to form an alternative cap-binding complex (CBC) which plays a key role in mRNA export and is particularly important in cellular stress situations such as virus infections. The conventional CBC with NCBP2 binds both small nuclear RNA (snRNA) and messenger (mRNA) and is involved in their export from the nucleus whereas the alternative CBC with NCBP3 does not bind snRNA and associates only with mRNA thereby playing a role only in mRNA export. NCBP1/CBP80 is required for cell growth and viability. The protein is Nuclear cap-binding protein subunit 1 (NCBP1) of Homo sapiens (Human).